Reading from the N-terminus, the 69-residue chain is Mu-conotoxin-like Am3.1 (69 aa).

The signal sequence occupies residues 1-20 (MMSKLRVLLIICLLLFPLTA). Residues 21–52 (VPLDGDQPADRPAERTQDDISSEHHPMFDAVR) constitute a propeptide that is removed on maturation. The interval 22–43 (PLDGDQPADRPAERTQDDISSE) is disordered. The segment covering 28 to 43 (PADRPAERTQDDISSE) has biased composition (basic and acidic residues). The residue at position 66 (Pro66) is a 4-hydroxyproline; partial; in minor form. Cys68 bears the Cysteine amide mark.

The protein belongs to the conotoxin M family. Post-translationally, mostly non-hydroxylated. Contains 3 disulfide bonds. As to expression, expressed by the venom duct.

The protein resides in the secreted. Its function is as follows. Mu-conotoxins block voltage-gated sodium channels (Nav). This chain is Mu-conotoxin-like Am3.1, found in Conus amadis (Amadis cone).